We begin with the raw amino-acid sequence, 585 residues long: Epithelial sodium channel subunit gamma (585 aa).

At 1-55 (MAPGEKIKAKIKKNLPVTGPQAPTIKELMRWYCLNTNTHGCRRIVVSRGRLRRLL) the chain is on the cytoplasmic side. The chain crosses the membrane as a helical span at residues 56–76 (WIGFTLTAVALILWQCALLVF). At 77 to 477 (SFYTVSVSIK…GGQLGLWMSC (401 aa)) the chain is on the extracellular side. 6 cysteine pairs are disulfide-bonded: Cys-100-Cys-219, Cys-308-Cys-393, Cys-330-Cys-389, Cys-334-Cys-385, Cys-343-Cys-370, and Cys-345-Cys-359. An N-linked (GlcNAc...) asparagine glycan is attached at Asn-207. Asn-433 carries N-linked (GlcNAc...) asparagine glycosylation. Residues 478–498 (SVVCVIEIIEVFFIDFFSIIA) traverse the membrane as a helical segment. The Cytoplasmic portion of the chain corresponds to 499–585 (RRQWQKAKEW…LTDTQMLDEL (87 aa)). The tract at residues 513 to 534 (QAPPCPEAPRSPQGQDNPALDI) is disordered. The PY motif; recruits WW domain-containing proteins and is thereby required for ubiquitination and inhibition of the channel by NEDD4 and NEDD4L motif lies at 559–563 (PPPKY).

It belongs to the amiloride-sensitive sodium channel (TC 1.A.6) family. SCNN1G subfamily. As to quaternary structure, component of the heterotrimeric epithelial sodium channel (ENaC) composed of an alpha/SCNN1A, a beta/SCNN1B and a gamma/SCNN1G subunit. An additional delta/SCNN1D subunit can replace the alpha/SCNN1A subunit to form an alternative channel with specific properties. Interacts with WWP1 (via WW domains). Interacts with WWP2 (via WW domains); inhibits the channel. Interacts with the full-length immature form of PCSK9 (pro-PCSK9); inhibits ENaC by promoting its proteasomal degradation. Interacts with BPIFA1; the interaction is indirect via SCNN1B and inhibits the proteolytic maturation of SCNN1A and SCNN1G and the activation of ENaC. Post-translationally, phosphorylated on serine and threonine residues. Aldosterone and insulin increase the basal level of phosphorylation. In terms of processing, ubiquitinated. Can be ubiquitinated at multiple sites and undergo monoubiquitination and polyubiquitination. Ubiquitination by NEDD4 or NEDD4L inhibits the ENaC channel through endocytosis, intracellular retention and degradation of its individual subunits. ENaC is activated through the proteolytic maturation of its subunits. Furin cleaves the SCNN1G subunit first, followed by cleavage by prostasin (PRSS8), which results in a stepwise increase in the open probability of the channel due to the release of an inhibitory tract. BPIFA1, which is recruited by the SCNN1B subunit, prevents the proteolytic activation of ENaC. Post-translationally, N-glycosylated. N-linked glycans are processed to complex type during ENaC complex assembly and transport to the plasma membrane.

The protein localises to the apical cell membrane. The enzyme catalyses Na(+)(in) = Na(+)(out). Originally identified and characterized by its inhibition by the diuretic drug amiloride. Functionally, this is one of the three pore-forming subunits of the heterotrimeric epithelial sodium channel (ENaC), a critical regulator of sodium balance and fluid homeostasis. ENaC operates in epithelial tissues, where it mediates the electrodiffusion of sodium ions from extracellular fluid through the apical membrane of cells, with water following osmotically. It plays a key role in maintaining sodium homeostasis through electrogenic sodium reabsorption in the kidneys. Additionally, ENaC is essential for airway surface liquid homeostasis, which is crucial for proper mucus clearance. This is Epithelial sodium channel subunit gamma from Pan troglodytes (Chimpanzee).